Consider the following 477-residue polypeptide: Iroquois homeobox protein 6a (477 aa).

A DNA-binding region (homeobox) is located at residues 148-210 (GSTRRKNATR…NARRRLKKEN (63 aa)). 2 disordered regions span residues 209-282 (ENKM…PDIP) and 303-323 (DYLD…QSTS). A compositionally biased stretch (basic and acidic residues) spans 219–237 (KAGDDRKEDLDSKDSKDEQ). Over residues 243-253 (DLDDMEDEDCD) the composition is skewed to acidic residues. Over residues 254 to 264 (KLDSDCEKSGQ) the composition is skewed to basic and acidic residues. The span at 310–321 (SKPQQQQPSPQS) shows a compositional bias: low complexity.

This sequence belongs to the TALE/IRO homeobox family.

The protein localises to the nucleus. In terms of biological role, transcription factor. Binds to the iroquois binding site (IBS) motif of target genes to regulate gene expression; functions as a transcriptional activator or repressor. In concert with irx5a, plays a role in visual performance. This chain is Iroquois homeobox protein 6a, found in Danio rerio (Zebrafish).